Here is a 163-residue protein sequence, read N- to C-terminus: Small ribosomal subunit protein uS9 (163 aa).

The span at 1-11 (MAENTNDSQVV) shows a compositional bias: polar residues. The disordered stretch occupies residues 1–40 (MAENTNDSQVVETEEELTNYTTETNAGAGTGTSAIEPGYG). Low complexity predominate over residues 18 to 27 (TNYTTETNAG).

This sequence belongs to the universal ribosomal protein uS9 family.

In Bifidobacterium longum (strain DJO10A), this protein is Small ribosomal subunit protein uS9.